Here is a 130-residue protein sequence, read N- to C-terminus: Small ribosomal subunit protein uS9 (130 aa).

Over residues 99-110 the composition is skewed to basic and acidic residues; that stretch reads KKAGFLTRDPRM. The interval 99-130 is disordered; it reads KKAGFLTRDPRMKERKKYGLKKARRAPQFSKR. The span at 111-130 shows a compositional bias: basic residues; sequence KERKKYGLKKARRAPQFSKR.

This sequence belongs to the universal ribosomal protein uS9 family.

This is Small ribosomal subunit protein uS9 from Clostridium botulinum (strain Alaska E43 / Type E3).